Reading from the N-terminus, the 1392-residue chain is DNA-directed RNA polymerase subunit beta (1392 aa).

Belongs to the RNA polymerase beta chain family. In terms of assembly, the RNAP catalytic core consists of 2 alpha, 1 beta, 1 beta' and 1 omega subunit. When a sigma factor is associated with the core the holoenzyme is formed, which can initiate transcription.

It catalyses the reaction RNA(n) + a ribonucleoside 5'-triphosphate = RNA(n+1) + diphosphate. Functionally, DNA-dependent RNA polymerase catalyzes the transcription of DNA into RNA using the four ribonucleoside triphosphates as substrates. This is DNA-directed RNA polymerase subunit beta from Neisseria meningitidis serogroup B (strain ATCC BAA-335 / MC58).